Reading from the N-terminus, the 394-residue chain is GDP-mannose transporter (394 aa).

The Cytoplasmic segment spans residues 1–55 (MADKKNEDFVVRMPDNGTVEKEPFLARSPPARARTGSGGGFGDSFSLARVANNPP). The chain crosses the membrane as a helical span at residues 56-76 (AAILAYCLSSISMTVVNKYVV). Residues 77–80 (SGSE) are Lumenal-facing. A helical transmembrane segment spans residues 81–101 (WNLNFFYLAVQAIVCIIAILF). At 102–121 (CKQIGIITNLAPFDNVKAKK) the chain is on the cytoplasmic side. A helical membrane pass occupies residues 122–144 (WFPVSLLLVGMIYTSTKALQFLS). The Lumenal segment spans residues 145–149 (VPVYT). Residues 150–167 (IFKNLTIIAIAYGEVLWF) traverse the membrane as a helical segment. Over 168 to 173 (GGSVSP) the chain is Cytoplasmic. The helical transmembrane segment at 174 to 198 (LALVSFGLMVLSSVVAAWADIQSAI) threads the bilayer. Over 199–213 (HGGSHPSEASTAIST) the chain is Lumenal. A helical membrane pass occupies residues 214-234 (LNAGYAWMGMNVFCSAAYLLG). The Cytoplasmic segment spans residues 235-246 (MRKVIHKMNFKD). A helical transmembrane segment spans residues 247 to 267 (WDSMFYNNLLTIPVLIVCSLI). At 268 to 287 (AEDWSAANLARNFPIESRNA) the chain is on the lumenal side. Residues 288-308 (LFIGMIYSGLGAIFISYCSAW) form a helical membrane-spanning segment. Residues 309 to 316 (CIRVTTST) lie on the Cytoplasmic side of the membrane. The chain crosses the membrane as a helical span at residues 317-339 (TYSMVGALNKLPIAISGLVFFSA). Over 340-342 (PVT) the chain is Lumenal. A helical membrane pass occupies residues 343–362 (FGSVSAIVIGFISGIVYAWA). The Cytoplasmic portion of the chain corresponds to 363 to 394 (KARQSSQAKSALPTQQPVMSASSQSNKDASNS). Residues 371–394 (KSALPTQQPVMSASSQSNKDASNS) are disordered. The segment covering 374-394 (LPTQQPVMSASSQSNKDASNS) has biased composition (polar residues).

The protein belongs to the TPT transporter family. SLC35D subfamily. Homooligomer.

It is found in the golgi apparatus membrane. It localises to the cytoplasmic vesicle membrane. The protein resides in the endoplasmic reticulum membrane. Its function is as follows. Involved in the import of GDP-mannose from the cytoplasm into the Golgi lumen. In Pyricularia oryzae (strain 70-15 / ATCC MYA-4617 / FGSC 8958) (Rice blast fungus), this protein is GDP-mannose transporter (VRG4).